The following is an 87-amino-acid chain: Venom serine protease inhibitor (87 aa).

The N-terminal stretch at 1 to 23 (MPRLVLVSFLFLAIFSVFIGGFA) is a signal peptide. Disulfide bonds link Cys-27–Cys-61, Cys-36–Cys-57, Cys-40–Cys-53, Cys-44–Cys-81, and Cys-63–Cys-75. Residues 27–81 (CPRNEIFTRCHAACQPSCARLARKPFCIKICKPGCICTSGYLRNKNNVCVPRSRC) form the TIL domain.

The protein belongs to the serine protease inhibitor-like (TIL domain-containing) family. In terms of tissue distribution, specifically expressed by the venom gland.

It localises to the secreted. Functionally, antifibrinolytic and antimicrobial serine protease inhibitor. Inhibits trypsin, plasmin and microbial serine proteases but not chymotrypsin, thrombin and elastase. Inhibits the plasmin-mediated degradation of fibrin to fibrin degradation products. Also binds to bacterial and fungal surfaces and exhibits antimicrobial activity against fungi as well as Gram-positive and Gram-negative bacteria. The sequence is that of Venom serine protease inhibitor from Apis cerana (Indian honeybee).